The following is a 376-amino-acid chain: N-acetyldiaminopimelate deacetylase (376 aa).

D69 is a catalytic residue. The Proton acceptor role is filled by E128.

It belongs to the peptidase M20A family. N-acetyldiaminopimelate deacetylase subfamily.

It catalyses the reaction N-acetyl-(2S,6S)-2,6-diaminopimelate + H2O = (2S,6S)-2,6-diaminopimelate + acetate. It participates in amino-acid biosynthesis; L-lysine biosynthesis via DAP pathway; LL-2,6-diaminopimelate from (S)-tetrahydrodipicolinate (acetylase route): step 3/3. Catalyzes the conversion of N-acetyl-diaminopimelate to diaminopimelate and acetate. The sequence is that of N-acetyldiaminopimelate deacetylase from Bacillus cereus (strain B4264).